Consider the following 706-residue polypeptide: Glutamine-dependent NAD(+) synthetase (706 aa).

A CN hydrolase domain is found at V5–L275. The active-site Proton acceptor; for glutaminase activity is E45. Residue K114 is the For glutaminase activity of the active site. The active-site Nucleophile; for glutaminase activity is C175. The interval Y325–D706 is ligase. P355–S362 is a binding site for ATP. The active site involves S357.

The protein in the C-terminal section; belongs to the NAD synthetase family. As to quaternary structure, homohexamer.

The enzyme catalyses deamido-NAD(+) + L-glutamine + ATP + H2O = L-glutamate + AMP + diphosphate + NAD(+) + H(+). It functions in the pathway cofactor biosynthesis; NAD(+) biosynthesis; NAD(+) from deamido-NAD(+) (L-Gln route): step 1/1. Its function is as follows. Catalyzes the final step of the nicotinamide adenine dinucleotide (NAD) de novo synthesis pathway, the ATP-dependent amidation of deamido-NAD using L-glutamine as a nitrogen source. This chain is Glutamine-dependent NAD(+) synthetase (NADSYN1), found in Macaca fascicularis (Crab-eating macaque).